Consider the following 89-residue polypeptide: Small ribosomal subunit protein uS17 (89 aa).

Belongs to the universal ribosomal protein uS17 family. As to quaternary structure, part of the 30S ribosomal subunit.

Its function is as follows. One of the primary rRNA binding proteins, it binds specifically to the 5'-end of 16S ribosomal RNA. This Azoarcus sp. (strain BH72) protein is Small ribosomal subunit protein uS17.